A 394-amino-acid polypeptide reads, in one-letter code: Elongation factor Tu 1 (394 aa).

The 196-residue stretch at 9–204 (KPHCNIGTIG…AIDDYIPQPT (196 aa)) folds into the tr-type G domain. The G1 stretch occupies residues 18-25 (GHVDHGKT). 18–25 (GHVDHGKT) is a GTP binding site. T25 serves as a coordination point for Mg(2+). The tract at residues 61 to 65 (GITIQ) is G2. The tract at residues 82 to 85 (DCPG) is G3. GTP contacts are provided by residues 82 to 86 (DCPGH) and 137 to 140 (NKID). Residues 137 to 140 (NKID) form a G4 region. The tract at residues 174–176 (SAL) is G5.

This sequence belongs to the TRAFAC class translation factor GTPase superfamily. Classic translation factor GTPase family. EF-Tu/EF-1A subfamily. In terms of assembly, monomer.

The protein resides in the cytoplasm. It carries out the reaction GTP + H2O = GDP + phosphate + H(+). Its function is as follows. GTP hydrolase that promotes the GTP-dependent binding of aminoacyl-tRNA to the A-site of ribosomes during protein biosynthesis. The sequence is that of Elongation factor Tu 1 from Orientia tsutsugamushi (strain Boryong) (Rickettsia tsutsugamushi).